A 256-amino-acid polypeptide reads, in one-letter code: Imidazole glycerol phosphate synthase subunit HisF (256 aa).

Residues D12 and D131 contribute to the active site.

This sequence belongs to the HisA/HisF family. As to quaternary structure, heterodimer of HisH and HisF.

The protein resides in the cytoplasm. The catalysed reaction is 5-[(5-phospho-1-deoxy-D-ribulos-1-ylimino)methylamino]-1-(5-phospho-beta-D-ribosyl)imidazole-4-carboxamide + L-glutamine = D-erythro-1-(imidazol-4-yl)glycerol 3-phosphate + 5-amino-1-(5-phospho-beta-D-ribosyl)imidazole-4-carboxamide + L-glutamate + H(+). It functions in the pathway amino-acid biosynthesis; L-histidine biosynthesis; L-histidine from 5-phospho-alpha-D-ribose 1-diphosphate: step 5/9. Functionally, IGPS catalyzes the conversion of PRFAR and glutamine to IGP, AICAR and glutamate. The HisF subunit catalyzes the cyclization activity that produces IGP and AICAR from PRFAR using the ammonia provided by the HisH subunit. The chain is Imidazole glycerol phosphate synthase subunit HisF from Pseudomonas syringae pv. tomato (strain ATCC BAA-871 / DC3000).